Here is a 426-residue protein sequence, read N- to C-terminus: Tyrosine--tRNA ligase (426 aa).

Tyr38 provides a ligand contact to L-tyrosine. The short motif at 43–52 (PTADSLHIGS) is the 'HIGH' region element. Residues Tyr176 and Gln180 each contribute to the L-tyrosine site. The short motif at 236–240 (KFGKT) is the 'KMSKS' region element. Lys239 serves as a coordination point for ATP. Residues 359-426 (QTIVEVLTQS…KKLFNLYIWK (68 aa)) enclose the S4 RNA-binding domain.

Belongs to the class-I aminoacyl-tRNA synthetase family. TyrS type 1 subfamily. Homodimer.

Its subcellular location is the cytoplasm. It catalyses the reaction tRNA(Tyr) + L-tyrosine + ATP = L-tyrosyl-tRNA(Tyr) + AMP + diphosphate + H(+). Its function is as follows. Catalyzes the attachment of tyrosine to tRNA(Tyr) in a two-step reaction: tyrosine is first activated by ATP to form Tyr-AMP and then transferred to the acceptor end of tRNA(Tyr). In Aliivibrio salmonicida (strain LFI1238) (Vibrio salmonicida (strain LFI1238)), this protein is Tyrosine--tRNA ligase.